Consider the following 111-residue polypeptide: Probable 4-amino-4-deoxy-L-arabinose-phosphoundecaprenol flippase subunit ArnE (111 aa).

Transmembrane regions (helical) follow at residues 36–56 (IVLWLGLALACLGLAMMLWLL), 61–81 (VPVGIAYPMLSLNFVWVTLAA), and 88–108 (PVSPRHWCGVAFIIGGIVILG). Positions 40–109 (LGLALACLGL…IIGGIVILGS (70 aa)) constitute an EamA domain.

Belongs to the ArnE family. As to quaternary structure, heterodimer of ArnE and ArnF.

Its subcellular location is the cell inner membrane. It participates in bacterial outer membrane biogenesis; lipopolysaccharide biosynthesis. Its function is as follows. Translocates 4-amino-4-deoxy-L-arabinose-phosphoundecaprenol (alpha-L-Ara4N-phosphoundecaprenol) from the cytoplasmic to the periplasmic side of the inner membrane. The sequence is that of Probable 4-amino-4-deoxy-L-arabinose-phosphoundecaprenol flippase subunit ArnE from Shigella flexneri.